A 207-amino-acid chain; its full sequence is Gene 66 protein (207 aa).

This chain is Gene 66 protein (66), found in Mycobacterium (Mycobacteriophage L5).